Reading from the N-terminus, the 339-residue chain is Ketol-acid reductoisomerase (NADP(+)) (339 aa).

The KARI N-terminal Rossmann domain maps to 1-182; the sequence is MRVYYDRDAD…GGGRSGIIET (182 aa). NADP(+)-binding positions include 24–27, Arg48, Ser51, Ser53, and 83–86; these read YGSQ and DELQ. Residue His108 is part of the active site. Gly134 contacts NADP(+). Residues 183–328 form the KARI C-terminal knotted domain; sequence TFREECETDL…EKLRAMMPWI (146 aa). The Mg(2+) site is built by Asp191, Glu195, Glu227, and Glu231. Residue Ser252 coordinates substrate.

The protein belongs to the ketol-acid reductoisomerase family. Requires Mg(2+) as cofactor.

It catalyses the reaction (2R)-2,3-dihydroxy-3-methylbutanoate + NADP(+) = (2S)-2-acetolactate + NADPH + H(+). The enzyme catalyses (2R,3R)-2,3-dihydroxy-3-methylpentanoate + NADP(+) = (S)-2-ethyl-2-hydroxy-3-oxobutanoate + NADPH + H(+). It functions in the pathway amino-acid biosynthesis; L-isoleucine biosynthesis; L-isoleucine from 2-oxobutanoate: step 2/4. Its pathway is amino-acid biosynthesis; L-valine biosynthesis; L-valine from pyruvate: step 2/4. Functionally, involved in the biosynthesis of branched-chain amino acids (BCAA). Catalyzes an alkyl-migration followed by a ketol-acid reduction of (S)-2-acetolactate (S2AL) to yield (R)-2,3-dihydroxy-isovalerate. In the isomerase reaction, S2AL is rearranged via a Mg-dependent methyl migration to produce 3-hydroxy-3-methyl-2-ketobutyrate (HMKB). In the reductase reaction, this 2-ketoacid undergoes a metal-dependent reduction by NADPH to yield (R)-2,3-dihydroxy-isovalerate. The protein is Ketol-acid reductoisomerase (NADP(+)) of Chelativorans sp. (strain BNC1).